A 258-amino-acid chain; its full sequence is Putative ankyrin repeat domain-containing protein 30B-like (258 aa).

A disordered region spans residues 1 to 21 (MERLSAAPVKGQTGPERPSPF). ANK repeat units lie at residues 71–100 (KKRT…QLDV), 104–133 (ENRT…DPNI), 137–166 (YGNT…DIEV), and 170–199 (AGHT…NANA). A disordered region spans residues 216–258 (KISKNSQNSNPEGTSEGTPDEAAPLAERTPDTAESLVERTPDE). The segment covering 218 to 232 (SKNSQNSNPEGTSEG) has biased composition (polar residues). Residues 243–258 (RTPDTAESLVERTPDE) are compositionally biased toward basic and acidic residues.

This is Putative ankyrin repeat domain-containing protein 30B-like (ANKRD30BL) from Homo sapiens (Human).